The following is a 105-amino-acid chain: Probable tetrachloroethene reductive dehalogenase membrane anchor protein (105 aa).

3 helical membrane passes run 3 to 23 (IYDV…QYGI), 35 to 55 (IPLQ…LAWG), and 66 to 86 (AIGM…IITY).

This sequence belongs to the PceB family.

The protein resides in the cell membrane. Functionally, may act as a membrane anchor for the tetrachloroethene reductive dehalogenase PceA. In Dehalobacter restrictus (strain DSM 9455 / PER-K23), this protein is Probable tetrachloroethene reductive dehalogenase membrane anchor protein.